The following is a 338-amino-acid chain: Tetraacyldisaccharide 4'-kinase (338 aa).

Position 51–58 (51–58 (HVGGAGKT)) interacts with ATP.

Belongs to the LpxK family.

The catalysed reaction is a lipid A disaccharide + ATP = a lipid IVA + ADP + H(+). It functions in the pathway glycolipid biosynthesis; lipid IV(A) biosynthesis; lipid IV(A) from (3R)-3-hydroxytetradecanoyl-[acyl-carrier-protein] and UDP-N-acetyl-alpha-D-glucosamine: step 6/6. In terms of biological role, transfers the gamma-phosphate of ATP to the 4'-position of a tetraacyldisaccharide 1-phosphate intermediate (termed DS-1-P) to form tetraacyldisaccharide 1,4'-bis-phosphate (lipid IVA). The protein is Tetraacyldisaccharide 4'-kinase of Bradyrhizobium diazoefficiens (strain JCM 10833 / BCRC 13528 / IAM 13628 / NBRC 14792 / USDA 110).